The primary structure comprises 415 residues: Gamma-glutamyl phosphate reductase (415 aa).

It belongs to the gamma-glutamyl phosphate reductase family.

It localises to the cytoplasm. It carries out the reaction L-glutamate 5-semialdehyde + phosphate + NADP(+) = L-glutamyl 5-phosphate + NADPH + H(+). The protein operates within amino-acid biosynthesis; L-proline biosynthesis; L-glutamate 5-semialdehyde from L-glutamate: step 2/2. Its function is as follows. Catalyzes the NADPH-dependent reduction of L-glutamate 5-phosphate into L-glutamate 5-semialdehyde and phosphate. The product spontaneously undergoes cyclization to form 1-pyrroline-5-carboxylate. The chain is Gamma-glutamyl phosphate reductase from Bacteroides fragilis (strain YCH46).